We begin with the raw amino-acid sequence, 357 residues long: Adenosine deaminase (357 aa).

Positions 16 and 18 each coordinate Zn(2+). The substrate site is built by histidine 18, aspartate 20, and glycine 185. Residue histidine 212 coordinates Zn(2+). Glutamate 215 functions as the Proton donor in the catalytic mechanism. Position 294 (aspartate 294) interacts with Zn(2+). A substrate-binding site is contributed by aspartate 295.

This sequence belongs to the metallo-dependent hydrolases superfamily. Adenosine and AMP deaminases family. Requires Zn(2+) as cofactor.

It localises to the cell membrane. Its subcellular location is the cell junction. The protein localises to the cytoplasmic vesicle lumen. It is found in the cytoplasm. The protein resides in the lysosome. It catalyses the reaction adenosine + H2O + H(+) = inosine + NH4(+). The catalysed reaction is 2'-deoxyadenosine + H2O + H(+) = 2'-deoxyinosine + NH4(+). Catalyzes the hydrolytic deamination of adenosine and 2-deoxyadenosine. Plays an important role in purine metabolism and in adenosine homeostasis. Modulates signaling by extracellular adenosine, and so contributes indirectly to cellular signaling events. May act as a positive regulator of T-cell coactivation. The chain is Adenosine deaminase (ADA) from Gallus gallus (Chicken).